A 557-amino-acid polypeptide reads, in one-letter code: Carbamoyl phosphate synthase large chain, N-terminal section (557 aa).

Residues 1-402 (MPKRTDIKKI…ALLKAVRSLE (402 aa)) form a carboxyphosphate synthetic domain region. 12 residues coordinate ATP: Arg129, Arg169, Gly175, Gly176, Lys208, Leu210, Glu215, Gly241, Val242, His243, Gln285, and Glu299. Positions 133–328 (KETMESIGLK…IAKVAAKLAV (196 aa)) constitute an ATP-grasp domain. Positions 285, 299, and 301 each coordinate Mg(2+). 3 residues coordinate Mn(2+): Gln285, Glu299, and Asn301. An oligomerization domain region spans residues 403-553 (LDRYGLAFPK…PYYTVDGQEI (151 aa)).

Belongs to the CarB family. As to quaternary structure, composed of two chains; the small (or glutamine) chain promotes the hydrolysis of glutamine to ammonia, which is used by the large (or ammonia) chain to synthesize carbamoyl phosphate. Tetramer of heterodimers (alpha,beta)4. It depends on Mg(2+) as a cofactor. Mn(2+) is required as a cofactor.

The enzyme catalyses hydrogencarbonate + L-glutamine + 2 ATP + H2O = carbamoyl phosphate + L-glutamate + 2 ADP + phosphate + 2 H(+). It catalyses the reaction hydrogencarbonate + NH4(+) + 2 ATP = carbamoyl phosphate + 2 ADP + phosphate + 2 H(+). Its pathway is amino-acid biosynthesis; L-arginine biosynthesis; carbamoyl phosphate from bicarbonate: step 1/1. The protein operates within pyrimidine metabolism; UMP biosynthesis via de novo pathway; (S)-dihydroorotate from bicarbonate: step 1/3. In terms of biological role, large subunit of the glutamine-dependent carbamoyl phosphate synthetase (CPSase). CPSase catalyzes the formation of carbamoyl phosphate from the ammonia moiety of glutamine, carbonate, and phosphate donated by ATP, constituting the first step of 2 biosynthetic pathways, one leading to arginine and/or urea and the other to pyrimidine nucleotides. The large subunit (synthetase) binds the substrates ammonia (free or transferred from glutamine from the small subunit), hydrogencarbonate and ATP and carries out an ATP-coupled ligase reaction, activating hydrogencarbonate by forming carboxy phosphate which reacts with ammonia to form carbamoyl phosphate. This chain is Carbamoyl phosphate synthase large chain, N-terminal section (carB1), found in Aquifex aeolicus (strain VF5).